The sequence spans 421 residues: UPF0229 protein lpp2857 (421 aa).

The disordered stretch occupies residues 83–110 (IAGDRIKRPSGGGAGGAGGNASDSGEGE). Gly residues predominate over residues 92–101 (SGGGAGGAGG).

It belongs to the UPF0229 family.

This is UPF0229 protein lpp2857 from Legionella pneumophila (strain Paris).